The primary structure comprises 956 residues: NKSKKRRNRVSFLGVATIEPPKPIPLTWKTEKLVWVNQWPLPKQKLEALHLLANEQLEKGHIEPSFSPWNSPVFVIQKKSGKWRMLTDLRAVNAVIQPMGPLQPGLPSPAMIPKDWPLIIIDLKDCFFTIPLAEQDCEKFAFTIPAINNKEPATRFQWKVLPQGMLNSPTICQTFVGRALQPVRKKFSDCYIIHYIDDILCAAETKDKLIDCYTFLQAEVASAGLAIASDKIQTSTPFHYLGMQIENRKIKPQKIEIRKDTLKTLNDFQKLLGDINWIQPTLGIPTYAMSNLFSILRGDSDLNSKRILTPEATKEIKLVEEKIQSAQINRIDPLAPLQLLIFATAHSPTGIIIQNTDLVEWSFLPHSTVKTFTLYLDQIATLIGQTRLRIIKLCGNDPDKIVVPLTKEQVRQAFINSGAWQIGLANFVGIIDNHYPKTKIFQFLKLTTWILPKITRREPLENALTVFTDGSSNGKAAYTGPKERVIKTPYQSAQRAELVAVITVLQDFDQPINIISDSAYVVQATRVVETALIKYSMDDQLNQLFNLLQQTVRKRNFPFYITHIRAHTNLPGPLTKANEQADLLVSSALIKAQELHALTHVNAAGLKNKFDVTWKQAKDIVQHCTQCQVLHLPTQEAGVNPRGLCPNALWQMDVTHVPSFGRLSYVHVTVDTYSHFIWATCQTGESTSHVKKHLLSCFAVMGVPEKIKTDNGPGYCSKAFQKFLSQWKISHTTGIPYNSQGQAIVERTNRTLKTQLVKQKEGGDSKECTTPQMQLNLALYTLNFLNIYRNQTTTSAEQHLTGKKNSPHEGKLIWWKDNKNKTWEIGKVITWGRGFACVSPGENQLPVWIPTRHLKFYNEPIRDAKKSTSAETETPQSSTVDSQDEQNGDVRRTDEVAIHQEGRAADLGTTKEADAVSYKISREHKGDTNPREYAACSLDDCINGGKSPYACRSSCS.

The Reverse transcriptase domain maps to 57–245 (LEKGHIEPSF…TPFHYLGMQI (189 aa)). The LPQG motif lies at 161–164 (LPQG). A YXDD motif is present at residues 195–198 (YIDD). The RNase H type-1 domain maps to 460–590 (LENALTVFTD…ADLLVSSALI (131 aa)). 4 residues coordinate Mg(2+): Asp-469, Glu-497, Asp-517, and Asp-582. An Integrase-type zinc finger spans residues 587-628 (SALIKAQELHALTHVNAAGLKNKFDVTWKQAKDIVQHCTQCQ). 4 residues coordinate Zn(2+): His-596, His-600, Cys-624, and Cys-627. The Integrase catalytic domain occupies 642 to 803 (RGLCPNALWQ…TSAEQHLTGK (162 aa)). A DNA-binding region (integrase-type) is located at residues 811 to 859 (KLIWWKDNKNKTWEIGKVITWGRGFACVSPGENQLPVWIPTRHLKFYNE). The tract at residues 864-890 (AKKSTSAETETPQSSTVDSQDEQNGDV) is disordered. A compositionally biased stretch (polar residues) spans 869–881 (SAETETPQSSTVD).

This sequence belongs to the beta type-B retroviral polymerase family. HERV class-II K(HML-2) pol subfamily.

It catalyses the reaction DNA(n) + a 2'-deoxyribonucleoside 5'-triphosphate = DNA(n+1) + diphosphate. The enzyme catalyses Endonucleolytic cleavage to 5'-phosphomonoester.. Functionally, early post-infection, the reverse transcriptase converts the viral RNA genome into double-stranded viral DNA. The RNase H domain of the reverse transcriptase performs two functions. It degrades the RNA template and specifically removes the RNA primer from the RNA/DNA hybrid. Following nuclear import, the integrase catalyzes the insertion of the linear, double-stranded viral DNA into the host cell chromosome. Endogenous Pol proteins may have kept, lost or modified their original function during evolution. This chain is Endogenous retrovirus group K member 8 Pol protein (ERVK-8), found in Homo sapiens (Human).